We begin with the raw amino-acid sequence, 553 residues long: Probable cytochrome P450 301a1, mitochondrial (553 aa).

Cysteine 502 provides a ligand contact to heme.

This sequence belongs to the cytochrome P450 family. It depends on heme as a cofactor.

Its subcellular location is the mitochondrion membrane. This Drosophila melanogaster (Fruit fly) protein is Probable cytochrome P450 301a1, mitochondrial (Cyp301a1).